The following is a 424-amino-acid chain: Serine--tRNA ligase (424 aa).

231–233 (TAE) contacts L-serine. Residue 262–264 (RSE) participates in ATP binding. Residue E285 coordinates L-serine. 349–352 (EISS) is a binding site for ATP. S385 provides a ligand contact to L-serine.

The protein belongs to the class-II aminoacyl-tRNA synthetase family. Type-1 seryl-tRNA synthetase subfamily. Homodimer. The tRNA molecule binds across the dimer.

The protein resides in the cytoplasm. It catalyses the reaction tRNA(Ser) + L-serine + ATP = L-seryl-tRNA(Ser) + AMP + diphosphate + H(+). The catalysed reaction is tRNA(Sec) + L-serine + ATP = L-seryl-tRNA(Sec) + AMP + diphosphate + H(+). It participates in aminoacyl-tRNA biosynthesis; selenocysteinyl-tRNA(Sec) biosynthesis; L-seryl-tRNA(Sec) from L-serine and tRNA(Sec): step 1/1. Functionally, catalyzes the attachment of serine to tRNA(Ser). Is also able to aminoacylate tRNA(Sec) with serine, to form the misacylated tRNA L-seryl-tRNA(Sec), which will be further converted into selenocysteinyl-tRNA(Sec). This chain is Serine--tRNA ligase, found in Bacillus anthracis (strain A0248).